The following is a 297-amino-acid chain: Phosphatidylinositol N-acetylglucosaminyltransferase subunit C (297 aa).

Transmembrane regions (helical) follow at residues 67 to 87 (VFVVIWWYMDEGLLAPQWLFG), 88 to 108 (TGLASSLVGYVLFDLIDGGDG), 153 to 173 (AVFMLLGHLIFFDYGANAAIV), and 239 to 259 (AFGGLLSISAVGAILFALLLF).

The protein belongs to the PIGC family. As to quaternary structure, component of the glycosylphosphatidylinositol-N-acetylglucosaminyltransferase (GPI-GnT) complex composed at least by PIGA, PIGC, PIGH, PIGP, PIGQ, PIGY and DPM2. Interacts with PIGQ. Interacts with the heterodimer PIGA:PIGH.

The protein localises to the endoplasmic reticulum membrane. The protein operates within glycolipid biosynthesis; glycosylphosphatidylinositol-anchor biosynthesis. Functionally, part of the glycosylphosphatidylinositol-N-acetylglucosaminyltransferase (GPI-GnT) complex that catalyzes the transfer of N-acetylglucosamine from UDP-N-acetylglucosamine to phosphatidylinositol and participates in the first step of GPI biosynthesis. The polypeptide is Phosphatidylinositol N-acetylglucosaminyltransferase subunit C (Mus musculus (Mouse)).